The chain runs to 216 residues: Phosphoenolpyruvate guanylyltransferase (216 aa).

Phosphoenolpyruvate-binding residues include T150, G165, and S168.

This sequence belongs to the CofC family.

It carries out the reaction phosphoenolpyruvate + GTP + H(+) = enolpyruvoyl-2-diphospho-5'-guanosine + diphosphate. The protein operates within cofactor biosynthesis; coenzyme F420 biosynthesis. In terms of biological role, guanylyltransferase that catalyzes the activation of phosphoenolpyruvate (PEP) as enolpyruvoyl-2-diphospho-5'-guanosine, via the condensation of PEP with GTP. It is involved in the biosynthesis of coenzyme F420, a hydride carrier cofactor. This chain is Phosphoenolpyruvate guanylyltransferase, found in Mycobacterium leprae (strain Br4923).